A 274-amino-acid chain; its full sequence is Thiamine kinase (274 aa).

Belongs to the thiamine kinase family.

It carries out the reaction thiamine + ATP = thiamine phosphate + ADP + H(+). It functions in the pathway cofactor biosynthesis; thiamine diphosphate biosynthesis; thiamine phosphate from thiamine: step 1/1. Catalyzes the ATP-dependent phosphorylation of thiamine to thiamine phosphate. Is involved in thiamine salvage. This is Thiamine kinase from Escherichia coli O157:H7.